The chain runs to 352 residues: Phosphatidylglycerol--prolipoprotein diacylglyceryl transferase (352 aa).

4 helical membrane-spanning segments follow: residues 20-40 (WYGL…TWLA), 55-75 (FITY…VLFY), 97-117 (EGGM…LLYA), and 122-142 (VNSL…VFFG). A 1,2-diacyl-sn-glycero-3-phospho-(1'-sn-glycerol) is bound at residue R143. 3 helical membrane-spanning segments follow: residues 248-268 (SQLF…FFLW), 275-295 (GFIA…DEHF), and 314-334 (WLSL…TRAA).

It belongs to the Lgt family.

It localises to the cell inner membrane. The enzyme catalyses L-cysteinyl-[prolipoprotein] + a 1,2-diacyl-sn-glycero-3-phospho-(1'-sn-glycerol) = an S-1,2-diacyl-sn-glyceryl-L-cysteinyl-[prolipoprotein] + sn-glycerol 1-phosphate + H(+). It participates in protein modification; lipoprotein biosynthesis (diacylglyceryl transfer). Its function is as follows. Catalyzes the transfer of the diacylglyceryl group from phosphatidylglycerol to the sulfhydryl group of the N-terminal cysteine of a prolipoprotein, the first step in the formation of mature lipoproteins. The sequence is that of Phosphatidylglycerol--prolipoprotein diacylglyceryl transferase from Bdellovibrio bacteriovorus (strain ATCC 15356 / DSM 50701 / NCIMB 9529 / HD100).